The following is an 873-amino-acid chain: Ectonucleotide pyrophosphatase/phosphodiesterase family member 3 (873 aa).

At 1 to 11 (MESMLTLAMEQ) the chain is on the cytoplasmic side. The chain crosses the membrane as a helical; Signal-anchor for type II membrane protein span at residues 12 to 30 (PVKRNTLKKYKIACIVLLA). Residues 31-873 (LLVIVSLGLG…TYLPTFETTI (843 aa)) lie on the Extracellular side of the membrane. 2 SMB domains span residues 51–93 (QGSC…VEST) and 94–138 (RIWM…GETS). 10 disulfides stabilise this stretch: Cys-54-Cys-71, Cys-58-Cys-89, Cys-69-Cys-82, Cys-75-Cys-81, Cys-98-Cys-115, Cys-103-Cys-133, Cys-113-Cys-126, Cys-119-Cys-125, Cys-144-Cys-190, and Cys-152-Cys-364. The Cell attachment site signature appears at 78 to 80 (RGD). The segment at 160–544 (PVILFSMDGF…HGSLNHLLKV (385 aa)) is phosphodiesterase. Residue Asp-167 coordinates Zn(2+). ATP is bound at residue Lys-204. Thr-205 serves as a coordination point for Zn(2+). Thr-205 (nucleophile) is an active-site residue. Asn-226 provides a ligand contact to ATP. An N-linked (GlcNAc...) asparagine glycan is attached at Asn-236. Glu-275 contacts ATP. A glycan (N-linked (GlcNAc...) asparagine) is linked at Asn-279. Position 289 (Tyr-289) interacts with ATP. Residue Asn-290 is glycosylated (N-linked (GlcNAc...) asparagine). Residues Asp-325, His-329, Asp-372, and His-373 each contribute to the Zn(2+) site. 6 cysteine pairs are disulfide-bonded: Cys-380-Cys-477, Cys-428-Cys-816, Cys-561-Cys-621, Cys-573-Cys-677, Cys-575-Cys-662, and Cys-785-Cys-795. N-linked (GlcNAc...) asparagine glycosylation is present at Asn-425. His-482 is a Zn(2+) binding site. Residues Asn-532, Asn-592, Asn-685, and Asn-697 are each glycosylated (N-linked (GlcNAc...) asparagine). Residues 580 to 873 (NSIQLEQVNQ…TYLPTFETTI (294 aa)) form a nuclease region. Residues Asp-750, Asn-752, Asp-754, His-756, and Asp-758 each coordinate Ca(2+). An N-linked (GlcNAc...) asparagine glycan is attached at Asn-787.

As to quaternary structure, monomer and homodimer. It depends on Zn(2+) as a cofactor. Post-translationally, N-glycosylated. N-glycosylation is necessary for normal transport to the cell membrane, but is not the apical targeting signal.

It localises to the cell membrane. The protein localises to the apical cell membrane. It is found in the secreted. The catalysed reaction is a ribonucleoside 5'-triphosphate + H2O = a ribonucleoside 5'-phosphate + diphosphate + H(+). It catalyses the reaction ATP + H2O = AMP + diphosphate + H(+). The enzyme catalyses CTP + H2O = CMP + diphosphate + H(+). It carries out the reaction GTP + H2O = GMP + diphosphate + H(+). The catalysed reaction is UTP + H2O = UMP + diphosphate + H(+). It catalyses the reaction UDP-N-acetyl-alpha-D-glucosamine + H2O = N-acetyl-alpha-D-glucosamine 1-phosphate + UMP + 2 H(+). The enzyme catalyses P(1),P(3)-bis(5'-adenosyl) triphosphate + H2O = AMP + ADP + 2 H(+). It carries out the reaction P(1),P(4)-bis(5'-adenosyl) tetraphosphate + H2O = AMP + ATP + 2 H(+). The catalysed reaction is P(1),P(5)-bis(5'-adenosyl) pentaphosphate + H2O = adenosine 5'-tetraphosphate + AMP + 2 H(+). It catalyses the reaction P(1),P(4)-bis(5'-guanosyl) tetraphosphate + H2O = GMP + GTP + 2 H(+). The enzyme catalyses Hydrolytically removes 5'-nucleotides successively from the 3'-hydroxy termini of 3'-hydroxy-terminated oligonucleotides.. Hydrolase that metabolizes extracellular nucleotides, including ATP, GTP, UTP and CTP. Limits mast cells and basophils response during inflammation and during the chronic phases of allergic responses by eliminating extracellular ATP, a signaling molecule activating these cells in an autocrine manner. Metabolizes extracellular ATP in the lumen of the small intestine, and thereby prevents ATP-induced apoptosis of intestinal plasmacytoid dendritic cells. Has a broad specificity and can also hydrolyze UDP-GlcNAc into UMP and GlcNAc-1-phosphate and potentially several other intracellular nucleotide sugars, including UDP-GalNAc, CMP-NeuAc, GDP-Fuc, and UDP-GlcA. Thereby, could modulate glycan biosynthesis and protein glycosylation. Can hydrolyze extracellular dinucleoside polyphosphates, including the vasoactive adenosine polyphosphates as well. In addition, displays an alkaline phosphodiesterase activity in vitro. The protein is Ectonucleotide pyrophosphatase/phosphodiesterase family member 3 of Pongo abelii (Sumatran orangutan).